Here is a 443-residue protein sequence, read N- to C-terminus: sn-2 acyl-lipid omega-3 desaturase (ferredoxin), chloroplastic (443 aa).

The N-terminal 51 residues, methionine 1–arginine 51, are a transit peptide targeting the chloroplast. 2 helical membrane-spanning segments follow: residues methionine 120–leucine 140 and tryptophan 143–leucine 163. The Histidine box-1 signature appears at histidine 165–histidine 169. The Histidine box-2 motif lies at histidine 201–histidine 205. 2 helical membrane-spanning segments follow: residues threonine 281–valine 301 and leucine 304–leucine 324. Positions histidine 368–histidine 372 match the Histidine box-3 motif.

The protein belongs to the fatty acid desaturase type 1 family. Highly expressed in leaves and cotyledons, while no or little expression detected in mature seeds, roots and stems.

The protein localises to the plastid. It localises to the chloroplast membrane. It carries out the reaction a (7Z,10Z)-hexadecadienoyl-containing glycerolipid + 2 reduced [2Fe-2S]-[ferredoxin] + O2 + 2 H(+) = a (7Z,10Z,13Z)-hexadecatrienoyl-containing glycerolipid + 2 oxidized [2Fe-2S]-[ferredoxin] + 2 H2O. It catalyses the reaction a (9Z,12Z)-octadecadienoyl-containing glycerolipid + 2 reduced [2Fe-2S]-[ferredoxin] + O2 + 2 H(+) = (9Z,12Z,15Z)-octadecatrienoyl-containing glycerolipid + 2 oxidized [2Fe-2S]-[ferredoxin] + 2 H2O. It functions in the pathway lipid metabolism; polyunsaturated fatty acid biosynthesis. Functionally, chloroplast omega-3 fatty acid desaturase introduces the third double bond in the biosynthesis of 18:3, and probably also 16:3 fatty acids, important constituents of plant membranes. It is thought to use ferredoxin as an electron donor and to act on fatty acids esterified to galactolipids, sulfolipids and phosphatidylglycerol. This Helianthus annuus (Common sunflower) protein is sn-2 acyl-lipid omega-3 desaturase (ferredoxin), chloroplastic.